A 406-amino-acid chain; its full sequence is Aspartokinase (406 aa).

One can recognise an ACT domain in the interval 342–406 (IIGHGIKNDL…LLKISETGHC (65 aa)).

Belongs to the aspartokinase family.

It catalyses the reaction L-aspartate + ATP = 4-phospho-L-aspartate + ADP. The protein operates within amino-acid biosynthesis; L-lysine biosynthesis via DAP pathway; (S)-tetrahydrodipicolinate from L-aspartate: step 1/4. It participates in amino-acid biosynthesis; L-methionine biosynthesis via de novo pathway; L-homoserine from L-aspartate: step 1/3. Its pathway is amino-acid biosynthesis; L-threonine biosynthesis; L-threonine from L-aspartate: step 1/5. This chain is Aspartokinase (lysC), found in Rickettsia bellii (strain RML369-C).